A 201-amino-acid polypeptide reads, in one-letter code: uncharacterized protein (201 aa).

It belongs to the mimivirus L885/R898 family.

This is an uncharacterized protein from Acanthamoeba polyphaga (Amoeba).